The primary structure comprises 210 residues: Large ribosomal subunit protein uL3 (210 aa).

The protein belongs to the universal ribosomal protein uL3 family. In terms of assembly, part of the 50S ribosomal subunit. Forms a cluster with proteins L14 and L19.

One of the primary rRNA binding proteins, it binds directly near the 3'-end of the 23S rRNA, where it nucleates assembly of the 50S subunit. The chain is Large ribosomal subunit protein uL3 from Lawsonia intracellularis (strain PHE/MN1-00).